Consider the following 488-residue polypeptide: MSRSKMSSQRLWAVRAQFLLLWLLLWAAPVPWAEARRSRVSLPCPDACDPTRCPPLPSCSAGSALVPDRCGCCQVCAAVEGQECGGARGRPCVPGLRCGAPFSREPSGRAWLGTCGCAEGAEGAAVCGSDGRTYPSLCALRKENRAARQRGALPAVPVQKGACGDSGTTRAGRLRTKYNFIAAVVEKVAPSVVHLQLFRRSPLTNQEIPSSSGSGFIVSEDGLIVTNAHVLTNQQKIQVELQNGAQYEATVKDIDHKLDLALIKIEPDTDLPVLLLGRSSDLRAGEFVVALGSPFSLQNTVTAGIVSTTQRGGKELGLKDSDIDYIQTDAIINHGNSGGPLVNLDGDVIGINTLKVTAGISFAIPSDRIRQFLADYHERQLKGKAPLQKKYLGLRMLPLTLNLLQEMKRQDPDFPDVSSGVFVYEVIQGSAAASSGLRDHDVIVSINGQPVTTTTDVIEAVKDNAFLSIIVLRGSQTLFLTVTPEIIN.

Positions 1–35 (MSRSKMSSQRLWAVRAQFLLLWLLLWAAPVPWAEA) are cleaved as a signal peptide. In terms of domain architecture, IGFBP N-terminal spans 40 to 118 (VSLPCPDACD…RAWLGTCGCA (79 aa)). Intrachain disulfides connect cysteine 44-cysteine 70, cysteine 48-cysteine 72, cysteine 53-cysteine 73, cysteine 59-cysteine 76, cysteine 84-cysteine 98, and cysteine 92-cysteine 115. A serine protease region spans residues 213 to 373 (GSGFIVSEDG…IPSDRIRQFL (161 aa)). Catalysis depends on charge relay system residues histidine 229, aspartate 259, and serine 337. The PDZ domain occupies 384–476 (KAPLQKKYLG…LSIIVLRGSQ (93 aa)).

This sequence belongs to the peptidase S1C family.

It is found in the secreted. Serine protease. This chain is Serine protease HTR4 (Htra4), found in Rattus norvegicus (Rat).